Here is a 1213-residue protein sequence, read N- to C-terminus: DNA-directed RNA polymerase subunit beta' (1213 aa).

C60, C62, C75, and C78 together coordinate Zn(2+). Positions 450, 452, and 454 each coordinate Mg(2+). Positions 819, 893, 900, and 903 each coordinate Zn(2+).

This sequence belongs to the RNA polymerase beta' chain family. As to quaternary structure, the RNAP catalytic core consists of 2 alpha, 1 beta, 1 beta' and 1 omega subunit. When a sigma factor is associated with the core the holoenzyme is formed, which can initiate transcription. Requires Mg(2+) as cofactor. It depends on Zn(2+) as a cofactor.

The catalysed reaction is RNA(n) + a ribonucleoside 5'-triphosphate = RNA(n+1) + diphosphate. In terms of biological role, DNA-dependent RNA polymerase catalyzes the transcription of DNA into RNA using the four ribonucleoside triphosphates as substrates. The protein is DNA-directed RNA polymerase subunit beta' of Streptococcus pyogenes serotype M18 (strain MGAS8232).